The primary structure comprises 1142 residues: Serine/threonine-protein kinase dst2 (1142 aa).

Residues 20 to 276 (FELIEEIAEG…ATELLKHPFV (257 aa)) enclose the Protein kinase domain. ATP contacts are provided by residues 26–34 (IAEGSFGTV) and Lys-49. Residue Asp-141 is the Proton acceptor of the active site. The segment covering 300-322 (LEEGGDEDEDSSEQEGMDSDDKD) has biased composition (acidic residues). 5 disordered regions span residues 300 to 492 (LEEG…KTLE), 515 to 636 (KKQQ…KSTP), 744 to 768 (ETNH…TEQR), 939 to 974 (SIEE…GSVT), and 1040 to 1142 (EEQK…DNQD). A compositionally biased stretch (basic and acidic residues) spans 323 to 336 (SDLKKSVGTSDRKS). Polar residues predominate over residues 355–365 (QRKSTGQNLQL). Residues 371–390 (QQSSSSSSSSSSSLSSQSLQ) show a composition bias toward low complexity. Polar residues predominate over residues 391 to 413 (PQAVNKSTDRLSANINGSNTKSN). Positions 421 to 452 (AAASASASSLNLSTGNLQQSLSGSGSITTNSG) are enriched in low complexity. Basic and acidic residues predominate over residues 467 to 477 (SSDDRSPDIRT). Positions 541-554 (KQNAAKATQQQKQS) are enriched in low complexity. Basic and acidic residues-rich tracts occupy residues 555 to 588 (AAKE…KKNQ), 597 to 635 (KVTD…DKST), 744 to 760 (ETNH…EQHI), and 939 to 969 (SIEE…EQKK). Residues 716-1050 (QEYHTVLREN…EQKKSKLKLK (335 aa)) are a coiled coil. The span at 1068–1091 (TGTTPPSTSSNQKTLNNSNGASSN) shows a compositional bias: low complexity.

This sequence belongs to the protein kinase superfamily. STE Ser/Thr protein kinase family. STE20 subfamily. Mg(2+) serves as cofactor.

The enzyme catalyses L-seryl-[protein] + ATP = O-phospho-L-seryl-[protein] + ADP + H(+). It carries out the reaction L-threonyl-[protein] + ATP = O-phospho-L-threonyl-[protein] + ADP + H(+). The sequence is that of Serine/threonine-protein kinase dst2 from Dictyostelium discoideum (Social amoeba).